The sequence spans 434 residues: Neuropeptide receptor 22 (434 aa).

Residues 1–55 (MDEGGGIGSSLLSRITTTASEIMMRNEPTTTENPAVQEMNHIYHLTPSMKMLCIL) lie on the Extracellular side of the membrane. The helical transmembrane segment at 56 to 76 (FYSILCVCCVYGNVLVILVIV) threads the bilayer. The Cytoplasmic segment spans residues 77-86 (YFKRLRTATN). Residues 87–107 (ILILNLAVADLLISVFCIPFS) form a helical membrane-spanning segment. Residues 108–128 (YWQVLIYDDQRWLFGSMMCSL) are Extracellular-facing. Residues cysteine 126 and cysteine 204 are joined by a disulfide bond. The helical transmembrane segment at 129–149 (LAFLQAMAVFLSAWTLVVISF) threads the bilayer. Topologically, residues 150–169 (DRWMAIMFLLTPNIRITRRR) are cytoplasmic. The chain crosses the membrane as a helical span at residues 170–190 (ALYLVAATWIFSILMALPLLF). Topologically, residues 191 to 226 (TTRFFEDQDGLPNCGENWTYFGDSGEQVRKVYSSMV) are extracellular. A glycan (N-linked (GlcNAc...) asparagine) is linked at asparagine 207. A helical transmembrane segment spans residues 227–247 (LILQYVVPQAVLIITYTHIGI). Over 248 to 277 (KMWNSRVPGMQNGATKKMIVDRHESVKKLV) the chain is Cytoplasmic. Residues 278-298 (PMVILISALFALCWLPLLILI) traverse the membrane as a helical segment. Over 299-310 (NVIPEFYPDINS) the chain is Extracellular. A helical membrane pass occupies residues 311–331 (WGYILYLWWFAHGLAMSHSMV). Residues 332-434 (NPIIYFIRNA…VRNNSANSLA (103 aa)) lie on the Cytoplasmic side of the membrane.

It belongs to the G-protein coupled receptor 1 family. Expressed in many cells, mainly in the head region, with expression detected in the head muscles, I2 neurons, MC neurons, RIH neuron, AIA neurons, AUA neurons, ASK neurons, ASI neurons, a few B-type motorneurons in the posterior ventral nerve cord, pharyngeal muscles, body wall muscles, the intestine and a few classes of unidentified cells anterior to the nerve ring. Expression in the MC neurons is important to mediate suppression of feeding while expression in the RIH neuron is important for the facilitation of egg-laying. No expression detected in other tissues including hypodermis.

Its subcellular location is the cell membrane. Receptor for the LURY-1-1 and LURY-1-2 peptides which control food-related processes including feeding, lifespan, egg-laying and roaming behavior. Receptor for flp-7 which stimulates serotonin-induced fat loss. Serotonin induces secretion of flp-7 from neurons and binding to npr-22 which leads to induction of the atgp-1 lipase and subsequent fat loss. Acts in vitro as a receptor for the flp-7 FMRFamide-like neuropeptides TPMQRSSMVRF-amide, SPMQRSSMVRF-amide, SPMERSAMVRF-amide and SPMDRSKMVRF-amide. Also acts in vitro as a receptor for a number of other FMRFamide-like neuropeptides including the flp-1 neuropeptide PNFMRY-amide, the flp-9 neuropeptide KPSFVRF-amide, the flp-11 neuropeptides AMRNALVRF-amide, ASGGMRNALVRF-amide and NGAPQPFVRF-amide, the flp-13 neuropeptides AADGAPLIRF-amide, ASPSAPLIRF-amide, SPSAVPLIRF-amide, SAAAPLIRF-amide and ASSAPLIRF-amide, and the flp-22 neuropeptide SPSAKWMRF-amide. The SPMERSAMVRF-amide neuropeptide from flp-7 acts as the strongest in vitro activator of npr-22. This is Neuropeptide receptor 22 from Caenorhabditis elegans.